A 190-amino-acid polypeptide reads, in one-letter code: MSRRYTPLAWVLLALLGLGAAQDCGSIVSRGKWGALASKCSQRLRQPVRYVVVSHTAGSVCNTPASCQRQAQNVQYYHVRERGWCDVGYNFLIGEDGLVYEGRGWNTLGAHSGPTWNPIAIGISFMGNYMHRVPPASALRAAQSLLACGAARGYLTPNYEVKGHRDVQQTLSPGDELYKIIQQWPHYRRV.

The first 21 residues, 1-21 (MSRRYTPLAWVLLALLGLGAA), serve as a signal peptide directing secretion. A Pyrrolidone carboxylic acid modification is found at Gln22. Cystine bridges form between Cys24–Cys148, Cys40–Cys85, and Cys61–Cys67. The N-acetylmuramoyl-L-alanine amidase domain maps to 46–174 (QPVRYVVVSH…RDVQQTLSPG (129 aa)).

Belongs to the N-acetylmuramoyl-L-alanine amidase 2 family. Homodimer; disulfide-linked. As to expression, synthesized only in bone marrow. The mature protein is stored in the cytoplasmic granules of eosinophils and neutrophils but is absent from monocytes, lymphocytes, or platelets.

The protein resides in the secreted. Its subcellular location is the cytoplasmic granule. Functionally, innate immunity protein that plays several important functions in antimicrobial and antitumor defense systems. Acts as a pattern receptor that binds to murein peptidoglycans (PGN) of Gram-positive bacteria and thus provides bactericidal activity. Forms an equimolar complex with heat shock protein HSPA1A and induces programmed cell death through apoptosis and necroptosis in tumor cell lines by activating the TNFR1 receptor on the target cell membrane. In addition, acts in complex with the Ca(2+)-binding protein S100A4 as a chemoattractant able to induce lymphocyte movement. Mechanistically, this complex acts as a ligand of the chemotactic receptors CCR5 and CXCR3 which are present on the cells of the immune system. Also promotes the activation of lymphocytes that become able to kill virus-infected cells as well as tumor cells by modulating the spectrum of their target-cell specificity. Induction of cytotoxicity on monocyte surface requires interaction with TREM1 receptor. This Bos taurus (Bovine) protein is Peptidoglycan recognition protein 1 (PGLYRP1).